An 840-amino-acid polypeptide reads, in one-letter code: Microcephalin (840 aa).

The region spanning 1–93 (MAAHILKDVV…AHIDESLFPA (93 aa)) is the BRCT 1 domain. The segment at 184–206 (KEKRENLSPSSSQMIQQSHDNPS) is disordered. Polar residues predominate over residues 190–206 (LSPSSSQMIQQSHDNPS). A phosphoserine mark is found at serine 279, serine 287, serine 296, and serine 333. 2 disordered regions span residues 313–379 (PDQK…SIRR) and 418–437 (PDNL…QLPS). Position 335 is a phosphothreonine (threonine 335). Positions 355-378 (KRQRVSHGSHSPSKGKSKRKRSIR) are enriched in basic residues. Over residues 427–437 (ENLPPTSQLPS) the composition is skewed to polar residues. Serine 552 is subject to Phosphoserine. Residues 562–586 (LKSTQNKGTTSKISNSSEGEAQSEH) form a disordered region. Polar residues predominate over residues 563-581 (KSTQNKGTTSKISNSSEGE). BRCT domains are found at residues 644–734 (SGRG…PFEL) and 755–837 (YRGT…NYLL).

In terms of assembly, interacts with CDC27 and maybe other components of the APC/C complex. Interacts with histone variant H2AX under DNA damage conditions.

It is found in the cytoplasm. The protein resides in the cytoskeleton. Its subcellular location is the microtubule organizing center. It localises to the centrosome. Functionally, implicated in chromosome condensation and DNA damage induced cellular responses. May play a role in neurogenesis and regulation of the size of the cerebral cortex. This chain is Microcephalin, found in Hylobates lar (Lar gibbon).